We begin with the raw amino-acid sequence, 213 residues long: Anti-sigma-E factor ChrR (213 aa).

The tract at residues 2–85 (TIRHHVSDAL…QIQRPAPARR (84 aa)) is sufficient to bind sigma factor and inhibit its activity. The Zn(2+) site is built by His6, His31, Cys35, Cys38, His141, His143, Glu147, and His177. The tract at residues 86–194 (ADPRAPAPLA…LDCICLAATD (109 aa)) is required for response to singlet oxygen.

This sequence belongs to the zinc-associated anti-sigma factor (ZAS) superfamily. Forms a 1:1 complex with cognate ECF RNA polymerase sigma factor RpoE; this inhibits the interaction of RpoE with the RNA polymerase catalytic core. The cofactor is Zn(2+).

Functionally, anti-sigma factor that inhibits the activity of the extracytoplasmic function (ECF) sigma-E factor (RpoE), thereby indirectly regulating the transcription of the cycA and rpoE genes. ECF sigma factors are held in an inactive form by a cognate anti-sigma factor. In Cereibacter sphaeroides (strain ATCC 17023 / DSM 158 / JCM 6121 / CCUG 31486 / LMG 2827 / NBRC 12203 / NCIMB 8253 / ATH 2.4.1.) (Rhodobacter sphaeroides), this protein is Anti-sigma-E factor ChrR (chrR).